Consider the following 75-residue polypeptide: Antimicrobial peptide Meucin-49-1 (75 aa).

A signal peptide spans 1–22 (MNKKILLVIFIVTMLIVDEVNS).

This sequence belongs to the non-disulfide-bridged peptide (NDBP) superfamily. Long chain multifunctional peptide (group 2) family. As to expression, expressed by the venom gland.

Its subcellular location is the secreted. Functionally, antimicrobial peptide. The protein is Antimicrobial peptide Meucin-49-1 of Mesobuthus eupeus (Lesser Asian scorpion).